The chain runs to 839 residues: Autophagy-related protein 9A (839 aa).

A2 bears the N-acetylalanine mark. Residues 2-61 are Cytoplasmic-facing; that stretch reads AQFDTEYQRLEASYSDSPPGEEDLLVHVAEGSKSPWHHIENLDLFFSRVYNLHQKNGFTC. A Tyrosine-based sorting signal motif is present at residues 8–11; sequence YQRL. S14, S16, and S18 each carry phosphoserine. Residues 62-84 traverse the membrane as a helical segment; the sequence is MLIGEMFELMQFLFVVAFTTFLV. At 85-128 the chain is on the lumenal side; sequence SCVDYDILFANKMVNHSLHPTEPVKVTLPDAFLPAQVCSARIQE. Residue N99 is glycosylated (N-linked (GlcNAc...) asparagine). A helical membrane pass occupies residues 129-154; it reads NGSLITILVIAGVFWIHRLIKFIYNI. Over 155–290 the chain is Cytoplasmic; that stretch reads CCYWEIHSFY…ELAQRLSNRI (136 aa). Residues 291–301 lie within the membrane without spanning it; the sequence is LWIGIANFLLC. The Cytoplasmic segment spans residues 302–319; it reads PLILIWQILYAFFSYAEV. An intramembrane segment occupies 320–328; sequence LKREPGALG. Residues 329-371 are Cytoplasmic-facing; that stretch reads ARCWSLYGRCYLRHFNELEHELQSRLNRGYKPASKYMNCFLSP. A helical membrane pass occupies residues 372–397; the sequence is LLTLLAKNGAFFAGSILAVLIALTIY. Residues 398–406 lie on the Lumenal side of the membrane; it reads DEDVLAVEH. The chain crosses the membrane as a helical span at residues 407 to 424; sequence VLTTVTLLGVTVTVCRSF. The Cytoplasmic segment spans residues 425-470; sequence IPDQHMVFCPEQLLRVILAHIHYMPDHWQGNAHRSQTRDEFAQLFQ. The stretch at 471–480 is an intramembrane region; that stretch reads YKAVFILEEL. At 481–483 the chain is on the cytoplasmic side; that stretch reads LSP. An intramembrane segment occupies 484-492; that stretch reads IVTPLILIF. At 493 to 839 the chain is on the cytoplasmic side; sequence CLRPRALEII…DELPPQVHKV (347 aa). Phosphoserine is present on S656. Disordered stretches follow at residues 657-686 and 717-839; these read PLQP…SSGS and HKQQ…VHKV. Basic and acidic residues predominate over residues 724–736; sequence EPERHVWHRRESD. Residues S735, S738, S741, and S828 each carry the phosphoserine modification. Composition is skewed to acidic residues over residues 737–747 and 823–832; these read ESGESAPEEGG and VPEEGSEDEL.

The protein belongs to the ATG9 family. Homotrimer; forms a homotrimer with a central pore that forms a path between the two membrane leaflets. Interacts (via cytoplasmic its C-terminus) with ATG2A. Interacts with SUPT20H. Interacts (via the tyrosine-based sorting signal motif) with AP4M1; promoting association with the AP-4 complex. Interacts with ARFIP1 and ARFIP2. Interacts with ATG4A; the interaction is direct and promotes ATG9A trafficking. Post-translationally, ufmylated in a DDRGK1 dependent manner.

It is found in the preautophagosomal structure membrane. The protein localises to the cytoplasmic vesicle. Its subcellular location is the autophagosome membrane. The protein resides in the golgi apparatus. It localises to the trans-Golgi network membrane. It is found in the late endosome membrane. The protein localises to the recycling endosome membrane. Its subcellular location is the endoplasmic reticulum membrane. The protein resides in the mitochondrion membrane. It catalyses the reaction a 1,2-diacyl-sn-glycero-3-phosphocholine(in) = a 1,2-diacyl-sn-glycero-3-phosphocholine(out). It carries out the reaction a 1,2-diacyl-sn-glycero-3-phospho-L-serine(in) = a 1,2-diacyl-sn-glycero-3-phospho-L-serine(out). The enzyme catalyses a 1,2-diacyl-sn-glycero-3-phosphoethanolamine(in) = a 1,2-diacyl-sn-glycero-3-phosphoethanolamine(out). In terms of biological role, phospholipid scramblase involved in autophagy by mediating autophagosomal membrane expansion. Cycles between the preautophagosomal structure/phagophore assembly site (PAS) and the cytoplasmic vesicle pool and supplies membrane for the growing autophagosome. Lipid scramblase activity plays a key role in preautophagosomal structure/phagophore assembly by distributing the phospholipids that arrive through ATG2 (ATG2A or ATG2B) from the cytoplasmic to the luminal leaflet of the bilayer, thereby driving autophagosomal membrane expansion. Also required to supply phosphatidylinositol 4-phosphate to the autophagosome initiation site by recruiting the phosphatidylinositol 4-kinase beta (PI4KB) in a process dependent on ARFIP2, but not ARFIP1. In addition to autophagy, also plays a role in necrotic cell death. The polypeptide is Autophagy-related protein 9A (Mus musculus (Mouse)).